A 278-amino-acid polypeptide reads, in one-letter code: Elongation factor Ts (278 aa).

The interval Thr-80–Val-83 is involved in Mg(2+) ion dislocation from EF-Tu.

It belongs to the EF-Ts family.

Its subcellular location is the cytoplasm. In terms of biological role, associates with the EF-Tu.GDP complex and induces the exchange of GDP to GTP. It remains bound to the aminoacyl-tRNA.EF-Tu.GTP complex up to the GTP hydrolysis stage on the ribosome. This is Elongation factor Ts from Micrococcus luteus (strain ATCC 4698 / DSM 20030 / JCM 1464 / CCM 169 / CCUG 5858 / IAM 1056 / NBRC 3333 / NCIMB 9278 / NCTC 2665 / VKM Ac-2230) (Micrococcus lysodeikticus).